The primary structure comprises 351 residues: Adenine deaminase (351 aa).

Zn(2+) is bound by residues His-19, His-21, and His-208. The active-site Proton donor is the Glu-211. Residue Asp-288 participates in Zn(2+) binding. Residue Asp-289 participates in substrate binding.

The protein belongs to the metallo-dependent hydrolases superfamily. Adenosine and AMP deaminases family. Adenine deaminase type 2 subfamily. Requires Zn(2+) as cofactor.

Its subcellular location is the cytoplasm. It localises to the nucleus. The catalysed reaction is adenine + H2O + H(+) = hypoxanthine + NH4(+). In terms of biological role, catalyzes the hydrolytic deamination of adenine to hypoxanthine. Plays an important role in the purine salvage pathway and in nitrogen catabolism. The polypeptide is Adenine deaminase (aah1) (Aspergillus oryzae (strain ATCC 42149 / RIB 40) (Yellow koji mold)).